A 454-amino-acid chain; its full sequence is Tyrosine aminotransferase (454 aa).

N-acetylmethionine is present on Met1. Lys280 bears the N6-(pyridoxal phosphate)lysine mark. Ser448 is subject to Phosphoserine.

The protein belongs to the class-I pyridoxal-phosphate-dependent aminotransferase family. In terms of assembly, homodimer. It depends on pyridoxal 5'-phosphate as a cofactor.

It carries out the reaction L-tyrosine + 2-oxoglutarate = 3-(4-hydroxyphenyl)pyruvate + L-glutamate. It functions in the pathway amino-acid degradation; L-phenylalanine degradation; acetoacetate and fumarate from L-phenylalanine: step 2/6. In terms of biological role, transaminase involved in tyrosine breakdown. Converts tyrosine to p-hydroxyphenylpyruvate. Can catalyze the reverse reaction, using glutamic acid, with 2-oxoglutarate as cosubstrate (in vitro). Has much lower affinity and transaminase activity towards phenylalanine. The polypeptide is Tyrosine aminotransferase (TAT) (Homo sapiens (Human)).